The primary structure comprises 352 residues: B1 bradykinin receptor (352 aa).

Topologically, residues 1-41 (MASWPPLQLQSSNQSQLFPQNATACDNAPEAWDLLHRVLPT) are extracellular. N13 and N21 each carry an N-linked (GlcNAc...) asparagine glycan. Residues 42 to 62 (FIISICSFGLLGNLFVLLVFL) traverse the membrane as a helical segment. Residues 63-72 (LPRRRLNVAE) are Cytoplasmic-facing. Residues 73–93 (IYLANLAASDLVFVLGLPFWA) form a helical membrane-spanning segment. Over 94 to 110 (ENIWNQFNWPFGALLCR) the chain is Extracellular. C109 and C188 are disulfide-bonded. Residues 111 to 131 (VINGIIKANLFISIFLVVAIS) form a helical membrane-spanning segment. Over 132 to 153 (QDRYCVLVHPMASRRRQRRRQA) the chain is Cytoplasmic. Residues 154-174 (RVTCVLIWVVGGLLSIPTFLL) traverse the membrane as a helical segment. Topologically, residues 175-206 (RSIQAVPDLNITACILLLPHEAWHFARIVELN) are extracellular. Residue N184 is glycosylated (N-linked (GlcNAc...) asparagine). Residues 207 to 227 (ILAFLLPLAAIIFFNYHILAS) form a helical membrane-spanning segment. At 228 to 250 (LRGREEVSRTRCGGSKDSKTTAL) the chain is on the cytoplasmic side. The chain crosses the membrane as a helical span at residues 251-271 (ILTLVVAFLVCWAPYHFFAFL). Over 272-294 (EFLFQVQAVRGCFWEDFIDLGLQ) the chain is Extracellular. Residues 295 to 315 (LANFLAFTNSSLNPVIYVFAG) form a helical membrane-spanning segment. At 316 to 352 (RLFRTKVWELYKQCTPKSLAPISSSHRKEIFQLFWRN) the chain is on the cytoplasmic side. The S-palmitoyl cysteine moiety is linked to residue C329.

The protein belongs to the G-protein coupled receptor 1 family. Bradykinin receptor subfamily. BDKRB1 sub-subfamily.

It localises to the cell membrane. Functionally, this is a receptor for bradykinin. Could be a factor in chronic pain and inflammation. The protein is B1 bradykinin receptor (BDKRB1) of Macaca fascicularis (Crab-eating macaque).